The primary structure comprises 167 residues: NADH-quinone oxidoreductase subunit B 1 (167 aa).

[4Fe-4S] cluster-binding residues include cysteine 38, cysteine 39, cysteine 104, and cysteine 133.

Belongs to the complex I 20 kDa subunit family. As to quaternary structure, NDH-1 is composed of 14 different subunits. Subunits NuoB, C, D, E, F, and G constitute the peripheral sector of the complex. Requires [4Fe-4S] cluster as cofactor.

Its subcellular location is the cell membrane. The enzyme catalyses a quinone + NADH + 5 H(+)(in) = a quinol + NAD(+) + 4 H(+)(out). Functionally, NDH-1 shuttles electrons from NADH, via FMN and iron-sulfur (Fe-S) centers, to quinones in the respiratory chain. The immediate electron acceptor for the enzyme in this species is believed to be ubiquinone. Couples the redox reaction to proton translocation (for every two electrons transferred, four hydrogen ions are translocated across the cytoplasmic membrane), and thus conserves the redox energy in a proton gradient. The chain is NADH-quinone oxidoreductase subunit B 1 from Roseiflexus castenholzii (strain DSM 13941 / HLO8).